Here is a 340-residue protein sequence, read N- to C-terminus: Glyceraldehyde-3-phosphate dehydrogenase (340 aa).

Residues 11–12 (SI) and Gly111 contribute to the NAD(+) site. D-glyceraldehyde 3-phosphate is bound at residue 140–142 (SCN). Cys141 serves as the catalytic Nucleophile. Arg169 contacts NAD(+). 195–196 (HG) contacts D-glyceraldehyde 3-phosphate. Position 303 (Gln303) interacts with NAD(+).

Belongs to the glyceraldehyde-3-phosphate dehydrogenase family. Homotetramer.

Its subcellular location is the cytoplasm. The enzyme catalyses D-glyceraldehyde 3-phosphate + phosphate + NADP(+) = (2R)-3-phospho-glyceroyl phosphate + NADPH + H(+). It carries out the reaction D-glyceraldehyde 3-phosphate + phosphate + NAD(+) = (2R)-3-phospho-glyceroyl phosphate + NADH + H(+). It participates in carbohydrate degradation; glycolysis; pyruvate from D-glyceraldehyde 3-phosphate: step 1/5. The sequence is that of Glyceraldehyde-3-phosphate dehydrogenase from Methanococcus maripaludis (strain C5 / ATCC BAA-1333).